A 356-amino-acid polypeptide reads, in one-letter code: MLDRLQSLEDRYNKLNEMLSDPEVINDSKKLREYSKEQSGLEDVVQAYREYKEVTEQLNDAKEMMEDKLDDEMYEMVKAEIAELNGRKEELESSMKILLLPKDPNDDKNVFMEIRGAAGGDEAALFAGDLYRMYSRYAEHQGWKIDVMEASSTGVGGYKEVIFMINGSDVYSKLKYENGAHRVQRVPETESGGRIHTSTATVAVLPEAEEVEVEVHDKDIRVDTFASSGPGGQSVNTTMSAVRLTHVPTGIVVSIQDEKSQIKNKEKAMKVLRARIYDKFQQEAQAEYDENRKSAVGSGDRSERIRTYNFPQNRVTDHRIGLTIQKLDQIMQGKLDEFIDALVMEEQTNKLEQIGE.

An N5-methylglutamine modification is found at glutamine 233.

It belongs to the prokaryotic/mitochondrial release factor family. Methylated by PrmC. Methylation increases the termination efficiency of RF1.

The protein resides in the cytoplasm. Its function is as follows. Peptide chain release factor 1 directs the termination of translation in response to the peptide chain termination codons UAG and UAA. The polypeptide is Peptide chain release factor 1 (Oceanobacillus iheyensis (strain DSM 14371 / CIP 107618 / JCM 11309 / KCTC 3954 / HTE831)).